Consider the following 174-residue polypeptide: Repair DNA polymerase X (174 aa).

An involved in ssDNA binding region spans residues 42–51; sequence REEKMLNDVD. Residues D49 and D51 each contribute to the Mg(2+) site. C81 and C86 are joined by a disulfide. D100 provides a ligand contact to Mg(2+).

This sequence belongs to the DNA polymerase type-X family. Requires Mg(2+) as cofactor.

It localises to the virion. It carries out the reaction DNA(n) + a 2'-deoxyribonucleoside 5'-triphosphate = DNA(n+1) + diphosphate. In terms of biological role, error-prone polymerase lacking a proofreading 3'-5' exonuclease which catalyzes the gap-filling reaction during the DNA repair process. Specifically binds intermediates in the single-nucleotide base-excision repair process. Also catalyzes DNA polymerization with low nucleotide-insertion fidelity. Probably acts as a strategic DNA mutase, which gives rise to a rapid emergence of variants. Generates mismatched G-G pairs, in that case, the polymerase first binds the deoxynucleotide followed by mismatch formation. Together with the viral DNA ligase, fills the single nucleotide gaps generated by the AP endonuclease. Binds DNA with high affinity via the helix alphaE. This Ornithodoros (relapsing fever ticks) protein is Repair DNA polymerase X.